We begin with the raw amino-acid sequence, 76 residues long: Large ribosomal subunit protein bL28 (76 aa).

Belongs to the bacterial ribosomal protein bL28 family.

The sequence is that of Large ribosomal subunit protein bL28 from Opitutus terrae (strain DSM 11246 / JCM 15787 / PB90-1).